Reading from the N-terminus, the 82-residue chain is Myrmicitoxin(1)-Pm3a (82 aa).

A signal peptide spans 1–23; that stretch reads MEIPKLLYIAVIAIGLSGSLTCA. Positions 24–59 are excised as a propeptide; that stretch reads TPLANPLADPEAEAEAKATAEATAEAIAEALAEPEP. A Leucine amide modification is found at L81.

This sequence belongs to the formicidae venom clade 1 family. In terms of tissue distribution, expressed by the venom gland.

Its subcellular location is the secreted. Functionally, toxin that causes a slowly developing temporary paralysis when intrathoracically injected into insects (blowflies). Does not cause spontaneous nocifensive behaviors by intraplantar injection in mice. This chain is Myrmicitoxin(1)-Pm3a, found in Pogonomyrmex maricopa (Maricopa harvester ant).